Reading from the N-terminus, the 371-residue chain is Maltose/maltodextrin import ATP-binding protein MalK (371 aa).

The ABC transporter domain occupies 4 to 234 (VTLKNVCKAY…PENRFVAGFI (231 aa)). Position 36–43 (36–43 (GPSGCGKS)) interacts with ATP.

It belongs to the ABC transporter superfamily. Maltooligosaccharide importer (TC 3.A.1.1.1) family. In terms of assembly, the complex is composed of two ATP-binding proteins (MalK), two transmembrane proteins (MalG and MalK) and a solute-binding protein (MalE).

It is found in the cell inner membrane. The enzyme catalyses D-maltose(out) + ATP + H2O = D-maltose(in) + ADP + phosphate + H(+). Its function is as follows. Part of the ABC transporter complex MalEFGK involved in maltose/maltodextrin import. Responsible for energy coupling to the transport system. In Vibrio vulnificus (strain CMCP6), this protein is Maltose/maltodextrin import ATP-binding protein MalK.